Consider the following 303-residue polypeptide: 4-hydroxy-tetrahydrodipicolinate synthase (303 aa).

T57 provides a ligand contact to pyruvate. The Proton donor/acceptor role is filled by Y143. K171 serves as the catalytic Schiff-base intermediate with substrate. I211 is a binding site for pyruvate.

This sequence belongs to the DapA family. Homotetramer; dimer of dimers.

The protein resides in the cytoplasm. It carries out the reaction L-aspartate 4-semialdehyde + pyruvate = (2S,4S)-4-hydroxy-2,3,4,5-tetrahydrodipicolinate + H2O + H(+). The protein operates within amino-acid biosynthesis; L-lysine biosynthesis via DAP pathway; (S)-tetrahydrodipicolinate from L-aspartate: step 3/4. Its function is as follows. Catalyzes the condensation of (S)-aspartate-beta-semialdehyde [(S)-ASA] and pyruvate to 4-hydroxy-tetrahydrodipicolinate (HTPA). The chain is 4-hydroxy-tetrahydrodipicolinate synthase from Bifidobacterium animalis subsp. lactis (strain AD011).